The following is a 335-amino-acid chain: Glutamyl-tRNA reductase (335 aa).

Substrate is bound by residues 60-63 (TCHR), serine 110, 115-117 (ETE), and glutamine 121. Cysteine 61 (nucleophile) is an active-site residue. Residue 189-194 (GYSEIN) participates in NADP(+) binding.

Belongs to the glutamyl-tRNA reductase family. As to quaternary structure, homodimer.

The enzyme catalyses (S)-4-amino-5-oxopentanoate + tRNA(Glu) + NADP(+) = L-glutamyl-tRNA(Glu) + NADPH + H(+). Its pathway is porphyrin-containing compound metabolism; protoporphyrin-IX biosynthesis; 5-aminolevulinate from L-glutamyl-tRNA(Glu): step 1/2. Functionally, catalyzes the NADPH-dependent reduction of glutamyl-tRNA(Glu) to glutamate 1-semialdehyde (GSA). The sequence is that of Glutamyl-tRNA reductase from Chlamydia trachomatis serovar L2 (strain ATCC VR-902B / DSM 19102 / 434/Bu).